The following is a 437-amino-acid chain: Kynureninase (437 aa).

Pyridoxal 5'-phosphate-binding positions include Leu-99, Thr-100, 127–130 (FPSD), Ser-183, Asp-212, His-215, and Tyr-237. N6-(pyridoxal phosphate)lysine is present on Lys-238. 2 residues coordinate pyridoxal 5'-phosphate: Trp-267 and Asn-295.

Belongs to the kynureninase family. In terms of assembly, homodimer. It depends on pyridoxal 5'-phosphate as a cofactor.

The protein resides in the cytoplasm. It catalyses the reaction L-kynurenine + H2O = anthranilate + L-alanine + H(+). The enzyme catalyses 3-hydroxy-L-kynurenine + H2O = 3-hydroxyanthranilate + L-alanine + H(+). The protein operates within amino-acid degradation; L-kynurenine degradation; L-alanine and anthranilate from L-kynurenine: step 1/1. Its pathway is cofactor biosynthesis; NAD(+) biosynthesis; quinolinate from L-kynurenine: step 2/3. Catalyzes the cleavage of L-kynurenine (L-Kyn) and L-3-hydroxykynurenine (L-3OHKyn) into anthranilic acid (AA) and 3-hydroxyanthranilic acid (3-OHAA), respectively. In Yarrowia lipolytica (strain CLIB 122 / E 150) (Yeast), this protein is Kynureninase.